The sequence spans 869 residues: Protein translocase subunit SecA (869 aa).

ATP is bound by residues Gln88, 106–110 (GEGKT), and Asp509. Residues 818–840 (QDEGLKFNQREGEDAPAVREKKI) are compositionally biased toward basic and acidic residues. The tract at residues 818–869 (QDEGLKFNQREGEDAPAVREKKIPRNSPCPCGSGKKYKDCCGKSGPKKGILA) is disordered. Zn(2+) is bound by residues Cys846, Cys848, Cys857, and Cys858.

It belongs to the SecA family. As to quaternary structure, monomer and homodimer. Part of the essential Sec protein translocation apparatus which comprises SecA, SecYEG and auxiliary proteins SecDF-YajC and YidC. Requires Zn(2+) as cofactor.

The protein resides in the cell inner membrane. The protein localises to the cytoplasm. The catalysed reaction is ATP + H2O + cellular proteinSide 1 = ADP + phosphate + cellular proteinSide 2.. Part of the Sec protein translocase complex. Interacts with the SecYEG preprotein conducting channel. Has a central role in coupling the hydrolysis of ATP to the transfer of proteins into and across the cell membrane, serving as an ATP-driven molecular motor driving the stepwise translocation of polypeptide chains across the membrane. This Campylobacter curvus (strain 525.92) protein is Protein translocase subunit SecA.